The primary structure comprises 571 residues: Phosphoenolpyruvate-protein phosphotransferase (571 aa).

Catalysis depends on H203, which acts as the Tele-phosphohistidine intermediate. 2 residues coordinate phosphoenolpyruvate: R306 and R342. Mg(2+) is bound by residues E429 and D453. Phosphoenolpyruvate-binding positions include 452–453 (ND) and R463. C500 functions as the Proton donor in the catalytic mechanism.

It belongs to the PEP-utilizing enzyme family. Homodimer. Requires Mg(2+) as cofactor.

Its subcellular location is the cytoplasm. The enzyme catalyses L-histidyl-[protein] + phosphoenolpyruvate = N(pros)-phospho-L-histidyl-[protein] + pyruvate. General (non sugar-specific) component of the phosphoenolpyruvate-dependent sugar phosphotransferase system (sugar PTS). This major carbohydrate active-transport system catalyzes the phosphorylation of incoming sugar substrates concomitantly with their translocation across the cell membrane. Enzyme I transfers the phosphoryl group from phosphoenolpyruvate (PEP) to the phosphoryl carrier protein (HPr). The polypeptide is Phosphoenolpyruvate-protein phosphotransferase (ptsI) (Chlamydia pneumoniae (Chlamydophila pneumoniae)).